The sequence spans 417 residues: METSTQTKAGSLTIVGTGIESIGQMTLQALSYIEAAAKVFYCVIDPATEAFILTKNKNCVDLYQYYDNGKSRLNTYTQMSELMVREVRKGLDVVGVFYGHPGVFVNPSHRALAIAKSEGYRARMLPGVSAEDCLFADLCIDPSNPGCLTYEASDFLIRDRPVSIHSHLVLFQVGCVGIADFNFTGFDNNKFGVLVDRLEQEYGAEHPVVHYIAAMMPHQDPVTDKYTVAQLREPEIAKRVGGVSTFYIPPKARKASNLDIIRRLELLPAGQVPDKKARIYPANQWEPDVPEVEPYRPSDQAAIAQLADHAPPEQYQPLATSKAMSDVMTKLALDPKALADYKADHRAFAQSVPDLTPQERAALELGDSWAIRCAMKNMPSSLLDAARESGEEASQNGFPWVIVVGVIGVIGSVMSTE.

The tract at residues 1-251 is methyltransferase domain; that stretch reads METSTQTKAG…GVSTFYIPPK (251 aa). Active-site residues include Arg72, Tyr76, and Tyr98. Tyr98, His100, Val103, Ala130, Gln172, Ala213, Ser244, and Thr245 together coordinate S-adenosyl-L-methionine. Residues 252–378 form a clasp domain region; that stretch reads ARKASNLDII…WAIRCAMKNM (127 aa). Positions 379–399 are precursor leader; it reads PSSLLDAARESGEEASQNGFP. N-methylvaline is present on residues Val401, Val403, and Val404. Gly405 carries the N-methylglycine modification. Residue Val406 is modified to N-methylvaline. An N-methylisoleucine modification is found at Ile407. Gly408 is modified (N-methylglycine). At Ile410 the chain carries N-methylisoleucine. Gly411 is modified (N-methylglycine). The residue at position 413 (Val413) is an N-methylvaline.

In the N-terminal section; belongs to the precorrin methyltransferase family. Homodimer. OphMA automethylates at Val-401, Val-403, Val-404, Gly-405, Val-406, Ile-407, Gly-408, Ile-410, Gly-411 and Val-413 before being processed by the prolyloligopeptidase ophP which likely forms a peptidyl ester upon removal of the follower propeptide, which then undergoes macrocyclization with the N-terminus of the modified core peptide. Peptide backbone alpha-N-methylations change the physicochemical properties of amide bonds to provide structural constraints and other favorable characteristics including biological membrane permeability to peptides.

Its pathway is mycotoxin biosynthesis. Fusion protein of the methyltransferase ophM and the omphalotin core peptide; part of the gene cluster that mediates the biosynthesis of omphalotin A, a highly methylated cyclic dodecapeptide with nematodicidal activity. Omphalotin A derives from the C-terminus of the ophMA protein, and it is the ophMA protein that methylates its own C-terminus using S-adenosyl methionine (SAM). The C-terminus is subsequently cleaved off and macrocyclized by the prolyloligopeptidase ophP to give the final product. The sequence is that of Methyltransferase/ribosomally synthesized cyclic peptide omphalotin A precursor ophMA from Omphalotus olearius (Jack o'lantern).